Consider the following 363-residue polypeptide: 3-isopropylmalate dehydrogenase (363 aa).

Residue 76-89 (GPKWDTLPGHLRPE) coordinates NAD(+). Substrate-binding residues include Arg96, Arg106, Arg134, and Asp223. The Mg(2+) site is built by Asp223, Asp247, and Asp251. 281 to 293 (GSAPDIAGKGVAN) is a binding site for NAD(+).

Belongs to the isocitrate and isopropylmalate dehydrogenases family. LeuB type 1 subfamily. Homodimer. Mg(2+) serves as cofactor. The cofactor is Mn(2+).

The protein localises to the cytoplasm. It catalyses the reaction (2R,3S)-3-isopropylmalate + NAD(+) = 4-methyl-2-oxopentanoate + CO2 + NADH. The protein operates within amino-acid biosynthesis; L-leucine biosynthesis; L-leucine from 3-methyl-2-oxobutanoate: step 3/4. Catalyzes the oxidation of 3-carboxy-2-hydroxy-4-methylpentanoate (3-isopropylmalate) to 3-carboxy-4-methyl-2-oxopentanoate. The product decarboxylates to 4-methyl-2 oxopentanoate. The protein is 3-isopropylmalate dehydrogenase of Halalkalibacterium halodurans (strain ATCC BAA-125 / DSM 18197 / FERM 7344 / JCM 9153 / C-125) (Bacillus halodurans).